Consider the following 280-residue polypeptide: MGEKAILDLHLVSDSTCETVVSVARAAVEHFKSLEVNEFVWSLVGSKSHVDRIISSIDRKRNNLIMYTVLDDDLREYLKKKAEAYNIRCIPILSHIIREISCYLSVAKDPNAHPHRLSDEYFNRIEAINYTIAHDDGQSLWDIDGADIIIVGVSRTSKSPTSIYLAYRGYKVVNIPFVHSITLPIDSAALADKLVVGLTIDIDRLIQIRRNRLISMKNQSNCNYISYEQVEQEISEVNRICMKNQWPLIDVTQKSIEETAATIIQFFNRKNNKIGGDAFC.

Position 152-159 (G152–S159) interacts with ADP.

This sequence belongs to the pyruvate, phosphate/water dikinase regulatory protein family. PDRP subfamily.

It catalyses the reaction N(tele)-phospho-L-histidyl/L-threonyl-[pyruvate, phosphate dikinase] + ADP = N(tele)-phospho-L-histidyl/O-phospho-L-threonyl-[pyruvate, phosphate dikinase] + AMP + H(+). The catalysed reaction is N(tele)-phospho-L-histidyl/O-phospho-L-threonyl-[pyruvate, phosphate dikinase] + phosphate + H(+) = N(tele)-phospho-L-histidyl/L-threonyl-[pyruvate, phosphate dikinase] + diphosphate. Its function is as follows. Bifunctional serine/threonine kinase and phosphorylase involved in the regulation of the pyruvate, phosphate dikinase (PPDK) by catalyzing its phosphorylation/dephosphorylation. The polypeptide is Putative pyruvate, phosphate dikinase regulatory protein (Anaplasma phagocytophilum (strain HZ)).